The primary structure comprises 248 residues: Probable transcriptional regulatory protein RPA1097 (248 aa).

Positions 1–21 are disordered; it reads MAGHSQFKNIMHRKGRQDAQR.

This sequence belongs to the TACO1 family.

Its subcellular location is the cytoplasm. The polypeptide is Probable transcriptional regulatory protein RPA1097 (Rhodopseudomonas palustris (strain ATCC BAA-98 / CGA009)).